Reading from the N-terminus, the 296-residue chain is Light-independent protochlorophyllide reductase iron-sulfur ATP-binding protein (296 aa).

ATP is bound by residues 39-44 (GIGKST) and lysine 68. Position 43 (serine 43) interacts with Mg(2+). Residues cysteine 124 and cysteine 158 each contribute to the [4Fe-4S] cluster site. An ATP-binding site is contributed by 209 to 210 (NR).

This sequence belongs to the NifH/BchL/ChlL family. Homodimer. Protochlorophyllide reductase is composed of three subunits; ChlL, ChlN and ChlB. [4Fe-4S] cluster is required as a cofactor.

The enzyme catalyses chlorophyllide a + oxidized 2[4Fe-4S]-[ferredoxin] + 2 ADP + 2 phosphate = protochlorophyllide a + reduced 2[4Fe-4S]-[ferredoxin] + 2 ATP + 2 H2O. The protein operates within porphyrin-containing compound metabolism; chlorophyll biosynthesis (light-independent). Component of the dark-operative protochlorophyllide reductase (DPOR) that uses Mg-ATP and reduced ferredoxin to reduce ring D of protochlorophyllide (Pchlide) to form chlorophyllide a (Chlide). This reaction is light-independent. The L component serves as a unique electron donor to the NB-component of the complex, and binds Mg-ATP. The polypeptide is Light-independent protochlorophyllide reductase iron-sulfur ATP-binding protein (Prochlorococcus marinus (strain MIT 9303)).